The following is a 113-amino-acid chain: U11-theraphotoxin-Hhn1k (113 aa).

Positions 1-21 are cleaved as a signal peptide; sequence MNTVRVTFLLVFVLAVSLGQA. Positions 22 to 74 are excised as a propeptide; the sequence is DKDENRMEMQEKTEQGKSYLDFAENLLLQKLEELEAKLLEEDSEESRNSRQKR. A disordered region spans residues 61–83; that stretch reads EEDSEESRNSRQKRCIGEGVPCD. Intrachain disulfides connect C75-C90, C82-C95, and C89-C110.

It belongs to the neurotoxin 14 (magi-1) family. 01 (HNTX-16) subfamily. As to expression, expressed by the venom gland.

Its subcellular location is the secreted. Functionally, probable ion channel inhibitor. This chain is U11-theraphotoxin-Hhn1k, found in Cyriopagopus hainanus (Chinese bird spider).